Here is a 263-residue protein sequence, read N- to C-terminus: H-2 class II histocompatibility antigen, A-U beta chain (263 aa).

A signal peptide spans 1-27 (MALQIPSLLLLAAVVVLMVLSSPGTEG). Residues 28–120 (GDSERHFVVQ…TEVPTSLRRL (93 aa)) are beta-1. Over 28-224 (GDSERHFVVQ…RAQSESARSK (197 aa)) the chain is Extracellular. 2 disulfides stabilise this stretch: Cys-42–Cys-104 and Cys-143–Cys-199. Residue Asn-46 is glycosylated (N-linked (GlcNAc...) asparagine). Residues 121–214 (EQPNVVISLS…SLKSPITVEW (94 aa)) are beta-2. The Ig-like C1-type domain maps to 123 to 211 (PNVVISLSRT…EHPSLKSPIT (89 aa)). A connecting peptide region spans residues 215–224 (RAQSESARSK). The chain crosses the membrane as a helical span at residues 225–245 (MLSGIGGCVLGVIFLGLGLFI). The Cytoplasmic segment spans residues 246–263 (RHRSQKGPRGPPPAGLLQ).

The protein belongs to the MHC class II family.

Its subcellular location is the membrane. The sequence is that of H-2 class II histocompatibility antigen, A-U beta chain from Mus musculus (Mouse).